A 100-amino-acid polypeptide reads, in one-letter code: Protein MEN-8 (100 aa).

The N-terminal stretch at 1–33 (MANNMKSATFCKATWAIFLVALAILVQLKGSEA) is a signal peptide. Intrachain disulfides connect Cys38-Cys76, Cys48-Cys65, Cys66-Cys91, and Cys78-Cys98.

The protein belongs to the A9/FIL1 family.

It localises to the secreted. The sequence is that of Protein MEN-8 (MEN-8) from Silene latifolia (White campion).